A 265-amino-acid polypeptide reads, in one-letter code: MYVGYVLDKDSPVYPGPARPASLGLGPQAYGPPAPPPAPPQYPDFSSYSHVEPAPAPPTAWGAPFPAPKDDWAAAYGPGPAAPAASPASLAFGPPPDFSPVPAPPGPGPGLLAQPLGGPGTPSSPGAQRPTPYEWMRRSVAAGGGGGSGKTRTKDKYRVVYTDHQRLELEKEFHYSRYITIRRKSELAANLGLTERQVKIWFQNRRAKERKVNKKKQQQQQPPQPPMAHDITATPAGPSLGGLCPSNTSLLATSSPMPVKEEFLP.

Residues 9-153 form a disordered region; that stretch reads KDSPVYPGPA…GGGGSGKTRT (145 aa). Over residues 30-42 the composition is skewed to pro residues; sequence YGPPAPPPAPPQY. The segment covering 73–92 has biased composition (low complexity); it reads AAAYGPGPAAPAASPASLAF. Residues 93–108 show a composition bias toward pro residues; that stretch reads GPPPDFSPVPAPPGPG. A compositionally biased stretch (low complexity) spans 110-126; that stretch reads GLLAQPLGGPGTPSSPG. The homeobox DNA-binding region spans 154 to 213; the sequence is KDKYRVVYTDHQRLELEKEFHYSRYITIRRKSELAANLGLTERQVKIWFQNRRAKERKVN. Residues 157–178 are interaction with DNA; that stretch reads YRVVYTDHQRLELEKEFHYSRY. Residues 196–207 are interaction with 5-mCpG DNA; sequence RQVKIWFQNRRA. Positions 207-217 are enriched in basic residues; the sequence is AKERKVNKKKQ. The segment at 207-265 is disordered; that stretch reads AKERKVNKKKQQQQQPPQPPMAHDITATPAGPSLGGLCPSNTSLLATSSPMPVKEEFLP. Positions 245-256 are enriched in polar residues; the sequence is PSNTSLLATSSP.

The protein belongs to the Caudal homeobox family. As to expression, intestinal epithelium.

The protein localises to the nucleus. Its function is as follows. Plays a role in transcriptional regulation. Involved in activated KRAS-mediated transcriptional activation of PRKD1 in colorectal cancer (CRC) cells. Binds to the PRKD1 promoter in colorectal cancer (CRC) cells. Could play a role in the terminal differentiation of the intestine. Binds preferentially to methylated DNA. The protein is Homeobox protein CDX-1 (CDX1) of Homo sapiens (Human).